The primary structure comprises 601 residues: NADH-ubiquinone oxidoreductase chain 5 (601 aa).

Helical transmembrane passes span 5–25 (ITSLMTNFCLITTILSLTLSF), 37–54 (YMRNAFIISLLPLIIYID), 83–105 (YCLTFFSIALYITWSIMQFSLWY), 112–129 (TLFFKYLTMFLISMLFFL), 134–156 (LLQLILGWEGMGIMSFLLINWWH), 169–189 (IIYNRIGDTGLIIFMIWSALF), 209–231 (WLPLLGIVLAATGKSAQFMLHPW), 240–260 (TPVSALLHSSTMVVSGVFLLI), 271–291 (MIISIILCLGAMTTLFAALCA), 300–320 (IIAFSTTSQLGLMTVTIGINQ), 323–343 (LAFLHMSTHAFFKALLFLCSA), 363–383 (LILPFTSSCTLISSLALMGMP), 400–420 (MSYVNAWALLSTMLATALTSI), 451–471 (PLIRLTLGSIIFGFIISTFFL), 478–498 (FSIPFNSKILPTIMLILVSSL), 508–528 (FSHMPPLFFPSMSGYFPAIFH), and 581–601 (NYITIFVITILSSLLTSALYF).

Belongs to the complex I subunit 5 family.

It is found in the mitochondrion inner membrane. The enzyme catalyses a ubiquinone + NADH + 5 H(+)(in) = a ubiquinol + NAD(+) + 4 H(+)(out). Core subunit of the mitochondrial membrane respiratory chain NADH dehydrogenase (Complex I) that is believed to belong to the minimal assembly required for catalysis. Complex I functions in the transfer of electrons from NADH to the respiratory chain. The immediate electron acceptor for the enzyme is believed to be ubiquinone. The sequence is that of NADH-ubiquinone oxidoreductase chain 5 (MT-ND5) from Myxine glutinosa (Atlantic hagfish).